The following is a 127-amino-acid chain: uncharacterized protein (127 aa).

The helical transmembrane segment at isoleucine 5–serine 25 threads the bilayer.

It localises to the membrane. This is an uncharacterized protein from Mycoplasma genitalium (strain ATCC 33530 / DSM 19775 / NCTC 10195 / G37) (Mycoplasmoides genitalium).